The chain runs to 505 residues: Peroxisome proliferator-activated receptor gamma (505 aa).

Thr84 carries an O-linked (GlcNAc) threonine glycan. Position 112 is a phosphoserine; by MAPK (Ser112). The nuclear receptor DNA-binding region spans 136 to 210 (AIECRVCGDK…VGMSHNAIRF (75 aa)). 2 consecutive NR C4-type zinc fingers follow at residues 139–159 (CRVC…CEGC) and 176–198 (CDLN…FQKC). Positions 205 to 280 (HNAIRFGRMP…DKSPFVIYDM (76 aa)) are interaction with FAM120B. Residues 238-503 (DLRALAKHLY…HPLLQEIYKD (266 aa)) form the NR LBD domain. Lys252 is covalently cross-linked (Glycyl lysine isopeptide (Lys-Gly) (interchain with G-Cter in ubiquitin)). Residues 495-503 (PLLQEIYKD) carry the 9aaTAD motif.

Belongs to the nuclear hormone receptor family. NR1 subfamily. As to quaternary structure, interacts with FOXO1 (acetylated form). Heterodimer with other nuclear receptors, such as RXRA. The heterodimer with the retinoic acid receptor RXRA is called adipocyte-specific transcription factor ARF6. Interacts with NCOA6 coactivator, leading to a strong increase in transcription of target genes. Interacts with coactivator PPARBP, leading to a mild increase in transcription of target genes. Interacts with NOCA7 in a ligand-inducible manner. Interacts with NCOA1 and NCOA2 LXXLL motifs. Interacts with ASXL1, ASXL2, DNTTIP2, FAM120B, MAP2K1/MEK1, NR0B2, PDPK1, PRDM16, PRMT2 and TGFB1I1. Interacts (when activated by agonist) with PPP5C. Interacts with HELZ2 and THRAP3; the interaction stimulates the transcriptional activity of PPARG. Interacts with PER2, the interaction is ligand dependent and blocks PPARG recruitment to target promoters. Interacts with NOCT. Interacts with ACTN4. Interacts (when in the liganded conformation) with GPS2. Interacts with CRY1 and CRY2 in a ligand-dependent manner. In the absence of hormonal ligand, interacts with TACC1. In macrophages, interacts with PAQR3 and STUB1; the interactions promote PPARG poylubiquitination and STUB1-mediated degradation. Post-translationally, O-GlcNAcylation at Thr-84 reduces transcriptional activity in adipocytes. Phosphorylated at basal conditions and dephosphorylated when treated with the ligand. May be dephosphorylated by PPP5C. The phosphorylated form may be inactive and dephosphorylation induces adipogenic activity. In terms of processing, ubiquitinated by E3 ubiquitin-protein ligase complex containing FBXO9; leading to proteasomal degradation. Ubiquitinated at Lys-252 by TRIM55 leading to proteasomal degradation. Ubiquitinated by E3 ubiquitin-protein ligase STUB1/CHIP; leading to proteasomal degradation. As to expression, highest expression in adipose tissue. Lower in liver, heart, kidney, stomach, duodenum and colon.

The protein resides in the nucleus. It is found in the cytoplasm. Its activity is regulated as follows. PDPK1 activates its transcriptional activity independently of its kinase activity. Nuclear receptor that binds peroxisome proliferators such as hypolipidemic drugs and fatty acids. Once activated by a ligand, the nuclear receptor binds to DNA specific PPAR response elements (PPRE) and modulates the transcription of its target genes, such as acyl-CoA oxidase. It therefore controls the peroxisomal beta-oxidation pathway of fatty acids. Key regulator of adipocyte differentiation and glucose homeostasis. ARF6 acts as a key regulator of the tissue-specific adipocyte P2 (aP2) enhancer. Acts as a critical regulator of gut homeostasis by suppressing NF-kappa-B-mediated pro-inflammatory responses. Plays a role in the regulation of cardiovascular circadian rhythms by regulating the transcription of BMAL1 in the blood vessels. The chain is Peroxisome proliferator-activated receptor gamma (PPARG) from Macaca mulatta (Rhesus macaque).